Consider the following 353-residue polypeptide: D-alanine--D-alanine ligase (353 aa).

The ATP-grasp domain maps to 135–344 (KMVFAQAGLA…FPQLVDRLVQ (210 aa)). 171 to 226 (EAQLDYPMFVKPANLGSSVGISKVRTRDELEKALDLAAEYDRRLIVEAGVTAREVE) is an ATP binding site. 3 residues coordinate Mg(2+): Asp297, Glu311, and Asn313.

Belongs to the D-alanine--D-alanine ligase family. Mg(2+) serves as cofactor. Requires Mn(2+) as cofactor.

The protein localises to the cytoplasm. It carries out the reaction 2 D-alanine + ATP = D-alanyl-D-alanine + ADP + phosphate + H(+). It functions in the pathway cell wall biogenesis; peptidoglycan biosynthesis. In terms of biological role, cell wall formation. This is D-alanine--D-alanine ligase from Picosynechococcus sp. (strain ATCC 27264 / PCC 7002 / PR-6) (Agmenellum quadruplicatum).